A 70-amino-acid polypeptide reads, in one-letter code: Small ribosomal subunit protein bS21 (70 aa).

This sequence belongs to the bacterial ribosomal protein bS21 family.

This is Small ribosomal subunit protein bS21 from Methylibium petroleiphilum (strain ATCC BAA-1232 / LMG 22953 / PM1).